Consider the following 262-residue polypeptide: ClpXP adapter protein SpxH (262 aa).

Belongs to the SpxH family. As to quaternary structure, interacts with Spx.

The protein localises to the cytoplasm. Adapter protein required for efficient degradation of Spx by ClpXP under non-stress conditions. Interaction with Spx stabilizes Spx and exposes the C-terminus of Spx for recognition and proteolysis by ClpXP. This chain is ClpXP adapter protein SpxH, found in Staphylococcus saprophyticus subsp. saprophyticus (strain ATCC 15305 / DSM 20229 / NCIMB 8711 / NCTC 7292 / S-41).